The chain runs to 282 residues: Aquaporin PIP2-7 (282 aa).

The interval 1–21 (MSKEVSVEGEQPPVKDYTDPP) is disordered. Residues 1–38 (MSKEVSVEGEQPPVKDYTDPPPEPLLNFGELRLWSFYR) are Cytoplasmic-facing. Residues 39 to 59 (ALIAEFVATLLFLYVTIATVI) form a helical membrane-spanning segment. The Extracellular segment spans residues 60 to 71 (GHKEQNAADQCS). The chain crosses the membrane as a helical span at residues 72–92 (GVGLLGIAWAFGGMIFILVYC). Topologically, residues 93-120 (TAGISGGHINPAVTLGLFLARKVSLIRA) are cytoplasmic. The NPA 1 signature appears at 102–104 (NPA). The helical transmembrane segment at 121–141 (LLYMVAQCLGAIVGVGIVKGI) threads the bilayer. The Extracellular portion of the chain corresponds to 142–162 (MKHQYNSLGGGANVVAAGYSK). Residues 163 to 183 (GTALGAEIIGTFVLVYTVFSA) traverse the membrane as a helical segment. At 184–196 (TDPKRSARDSHVP) the chain is on the cytoplasmic side. The helical transmembrane segment at 197–217 (VLAPLPIGFAVFMVHLATIPI) threads the bilayer. Residues 218-244 (TGTGINPARSLGAAVIYNQDKPWDDHW) lie on the Extracellular side of the membrane. The short motif at 223–225 (NPA) is the NPA 2 element. The helical transmembrane segment at 245–265 (ILWVGPFVGALAAAAYHQYIL) threads the bilayer. The Cytoplasmic portion of the chain corresponds to 266–282 (RAAAIKALGSFRSNPSN).

This sequence belongs to the MIP/aquaporin (TC 1.A.8) family. PIP (TC 1.A.8.11) subfamily. Expressed in roots, leaves and fruits.

It localises to the cell membrane. Its function is as follows. Water channel required to facilitate the transport of water across cell membrane; mercury-insensitive. Contributes to the tolerance to multiple abiotic stresses including salt (NaCl), cold and water deprivation, by modulating cytosolic K(+)/Na(+) ratio, maintaining osmotic balance, and reducing membrane injury (e.g. oxidative injury). Also regulates the expression of abscisic acid (ABA)- biosynthetic and -responsive genes during dehydration and salt stresses. The protein is Aquaporin PIP2-7 of Musa acuminata (Banana).